Reading from the N-terminus, the 122-residue chain is S-adenosylmethionine decarboxylase proenzyme (122 aa).

The active-site Schiff-base intermediate with substrate; via pyruvic acid is the Ser63. Ser63 carries the post-translational modification Pyruvic acid (Ser); by autocatalysis. Residue His68 is the Proton acceptor; for processing activity of the active site. Cys83 acts as the Proton donor; for catalytic activity in catalysis.

This sequence belongs to the prokaryotic AdoMetDC family. Type 1 subfamily. In terms of assembly, heterotetramer of two alpha and two beta chains arranged as a dimer of alpha/beta heterodimers. Pyruvate is required as a cofactor. In terms of processing, is synthesized initially as an inactive proenzyme. Formation of the active enzyme involves a self-maturation process in which the active site pyruvoyl group is generated from an internal serine residue via an autocatalytic post-translational modification. Two non-identical subunits are generated from the proenzyme in this reaction, and the pyruvate is formed at the N-terminus of the alpha chain, which is derived from the carboxyl end of the proenzyme. The post-translation cleavage follows an unusual pathway, termed non-hydrolytic serinolysis, in which the side chain hydroxyl group of the serine supplies its oxygen atom to form the C-terminus of the beta chain, while the remainder of the serine residue undergoes an oxidative deamination to produce ammonia and the pyruvoyl group blocking the N-terminus of the alpha chain.

It catalyses the reaction S-adenosyl-L-methionine + H(+) = S-adenosyl 3-(methylsulfanyl)propylamine + CO2. It functions in the pathway amine and polyamine biosynthesis; S-adenosylmethioninamine biosynthesis; S-adenosylmethioninamine from S-adenosyl-L-methionine: step 1/1. Its function is as follows. Catalyzes the decarboxylation of S-adenosylmethionine to S-adenosylmethioninamine (dcAdoMet), the propylamine donor required for the synthesis of the polyamines spermine and spermidine from the diamine putrescine. The chain is S-adenosylmethionine decarboxylase proenzyme from Methanococcus maripaludis (strain DSM 14266 / JCM 13030 / NBRC 101832 / S2 / LL).